A 344-amino-acid polypeptide reads, in one-letter code: Intraflagellar transport protein 46 (344 aa).

The segment covering 1-16 has biased composition (acidic residues); it reads MDDSMDYPDRDGDDLD. The tract at residues 1–100 is disordered; it reads MDDSMDYPDR…IANSDEAPPG (100 aa). Residues 18-30 show a composition bias toward polar residues; the sequence is FQGTARSQVVQNQ.

This sequence belongs to the IFT46 family. In terms of assembly, component of the IFT complex B, the core composed of IFT25, IFT27, IFT46, IFT52, IFT74, IFT81 and IFT88 as well as associated subunits IFT20, IFT57, IFT80 and IFT172. Interacts with IFT25, IFT52, IFT70, IFT88 and DAW1.

The protein localises to the cytoplasm. The protein resides in the cytoskeleton. It is found in the cilium basal body. It localises to the cell projection. Its subcellular location is the cilium. Its function is as follows. Forms part of a complex involved in intraflagellar transport (IFT), the bi-directional movement of particles required for the assembly, maintenance and functioning of primary cilia. Plays a role in maintaining IFT complex B stability. This Chlamydomonas reinhardtii (Chlamydomonas smithii) protein is Intraflagellar transport protein 46.